The following is a 311-amino-acid chain: Malate dehydrogenase (311 aa).

Residues 7-13 (GAAGGIG) and D34 contribute to the NAD(+) site. Positions 81 and 87 each coordinate substrate. Residues N94 and 117-119 (ITN) each bind NAD(+). N119 and R153 together coordinate substrate. Catalysis depends on H177, which acts as the Proton acceptor. M227 serves as a coordination point for NAD(+).

Belongs to the LDH/MDH superfamily. MDH type 1 family. Homodimer.

The enzyme catalyses (S)-malate + NAD(+) = oxaloacetate + NADH + H(+). In terms of biological role, catalyzes the reversible oxidation of malate to oxaloacetate. The sequence is that of Malate dehydrogenase from Haemophilus influenzae (strain 86-028NP).